The chain runs to 477 residues: Cysteine--tRNA ligase (477 aa).

Cys42 is a binding site for Zn(2+). The 'HIGH' region signature appears at Ala44–His54. Cys220, His245, and Glu249 together coordinate Zn(2+). Residues Lys276 to Ser280 carry the 'KMSKS' region motif. Residue Lys279 participates in ATP binding.

It belongs to the class-I aminoacyl-tRNA synthetase family. As to quaternary structure, monomer. Zn(2+) serves as cofactor.

Its subcellular location is the cytoplasm. It catalyses the reaction tRNA(Cys) + L-cysteine + ATP = L-cysteinyl-tRNA(Cys) + AMP + diphosphate. This chain is Cysteine--tRNA ligase, found in Mycolicibacterium smegmatis (strain ATCC 700084 / mc(2)155) (Mycobacterium smegmatis).